The following is a 278-amino-acid chain: HTH-type transcriptional activator RhaS (278 aa).

The 99-residue stretch at Asn-174–Gly-272 folds into the HTH araC/xylS-type domain. 2 DNA-binding regions (H-T-H motif) span residues Asp-191 to Thr-212 and Val-239 to Phe-262.

In terms of assembly, binds DNA as a dimer.

It localises to the cytoplasm. Activates expression of the rhaBAD and rhaT operons. This chain is HTH-type transcriptional activator RhaS, found in Shigella dysenteriae serotype 1 (strain Sd197).